The chain runs to 349 residues: tRNA pseudouridine synthase D (349 aa).

Asp77 functions as the Nucleophile in the catalytic mechanism. The TRUD domain maps to 151 to 309; it reads GVPNYFGEQR…ETIDESTLKL (159 aa).

Belongs to the pseudouridine synthase TruD family.

It carries out the reaction uridine(13) in tRNA = pseudouridine(13) in tRNA. Its function is as follows. Responsible for synthesis of pseudouridine from uracil-13 in transfer RNAs. This is tRNA pseudouridine synthase D from Pseudoalteromonas translucida (strain TAC 125).